The sequence spans 462 residues: Argininosuccinate lyase (462 aa).

Belongs to the lyase 1 family. Argininosuccinate lyase subfamily.

The protein localises to the cytoplasm. The enzyme catalyses 2-(N(omega)-L-arginino)succinate = fumarate + L-arginine. Its pathway is amino-acid biosynthesis; L-arginine biosynthesis; L-arginine from L-ornithine and carbamoyl phosphate: step 3/3. The sequence is that of Argininosuccinate lyase from Caldicellulosiruptor bescii (strain ATCC BAA-1888 / DSM 6725 / KCTC 15123 / Z-1320) (Anaerocellum thermophilum).